Here is a 269-residue protein sequence, read N- to C-terminus: Hdr-like menaquinol oxidoreductase iron-sulfur subunit 1 (269 aa).

The tat-type signal signal peptide spans 1-26 (MMSRRKFLLLTGAAAAGAILTPQISA). Positions 52, 55, 72, 76, 118, 121, 126, 130, 150, 153, 156, 160, 194, 197, 215, and 219 each coordinate [4Fe-4S] cluster. Residues 141–170 (GIVEIDMHRCIGCRYCMIACPYGARCFNFI) enclose the 4Fe-4S ferredoxin-type domain.

Consists of five subunits: an integral membrane subunit, a cytochrome b-like subunit, a cytochrome c subunit and two iron-sulfur subunits. The cofactor is [4Fe-4S] cluster. Predicted to be exported by the Tat system. The position of the signal peptide cleavage has been experimentally proven.

It localises to the cell membrane. Its function is as follows. Has menaquinol-oxidizing activity. HmeA, HmeB and HmeE subunits may together catalyze electron transfer from menaquinol to cytochrome c. The sequence is that of Hdr-like menaquinol oxidoreductase iron-sulfur subunit 1 (hmeA) from Archaeoglobus fulgidus (strain ATCC 49558 / DSM 4304 / JCM 9628 / NBRC 100126 / VC-16).